We begin with the raw amino-acid sequence, 466 residues long: Rho GTPase-activating protein 1 (466 aa).

Disordered stretches follow at residues 1–31 (MTEV…SLSY) and 65–84 (EEQD…DDGG). Positions 8-31 (PSSPSASHSSSSSSSSPSPSSLSY) are enriched in low complexity. Over residues 65–74 (EEQDLRRRSS) the composition is skewed to basic and acidic residues. Positions 117–130 (IGWPTNVRHVAHVT) constitute a CRIB domain. The region spanning 162 to 342 (VSTESMQLSY…TLIEKTLRER (181 aa)) is the Rho-GAP domain. Positions 354 to 402 (PLEPSDESGHQSPSQSLAFNTSEQSEETQSDNIENAENQSSSSEISDEL) are disordered. Polar residues-rich tracts occupy residues 363–376 (HQSP…NTSE) and 383–397 (SDNI…SSSE).

Its function is as follows. Acts as a GTPase activator for the Rac-type GTPase by converting it to an inactive GDP-bound state. In Arabidopsis thaliana (Mouse-ear cress), this protein is Rho GTPase-activating protein 1 (ROPGAP1).